We begin with the raw amino-acid sequence, 465 residues long: Ribulose bisphosphate carboxylase large chain (465 aa).

K4 carries the N6,N6,N6-trimethyllysine modification. Residues N113 and T163 each coordinate substrate. K165 (proton acceptor) is an active-site residue. Position 167 (K167) interacts with substrate. Residues K191, D193, and E194 each coordinate Mg(2+). K191 carries the post-translational modification N6-carboxylysine. H284 acts as the Proton acceptor in catalysis. Residues R285, H317, and S369 each contribute to the substrate site.

The protein belongs to the RuBisCO large chain family. Type I subfamily. In terms of assembly, heterohexadecamer of 8 large chains and 8 small chains; disulfide-linked. The disulfide link is formed within the large subunit homodimers. It depends on Mg(2+) as a cofactor. In terms of processing, the disulfide bond which can form in the large chain dimeric partners within the hexadecamer appears to be associated with oxidative stress and protein turnover.

The protein localises to the plastid. The protein resides in the chloroplast. The catalysed reaction is 2 (2R)-3-phosphoglycerate + 2 H(+) = D-ribulose 1,5-bisphosphate + CO2 + H2O. It catalyses the reaction D-ribulose 1,5-bisphosphate + O2 = 2-phosphoglycolate + (2R)-3-phosphoglycerate + 2 H(+). In terms of biological role, ruBisCO catalyzes two reactions: the carboxylation of D-ribulose 1,5-bisphosphate, the primary event in carbon dioxide fixation, as well as the oxidative fragmentation of the pentose substrate in the photorespiration process. Both reactions occur simultaneously and in competition at the same active site. The polypeptide is Ribulose bisphosphate carboxylase large chain (Cassia fistula (Golden shower tree)).